We begin with the raw amino-acid sequence, 82 residues long: UPF0512 protein P (82 aa).

The protein belongs to the UPF0512 family.

The polypeptide is UPF0512 protein P (Dictyostelium discoideum (Social amoeba)).